The following is a 103-amino-acid chain: Putative membrane protein insertion efficiency factor (103 aa).

It belongs to the UPF0161 family.

It is found in the cell inner membrane. Functionally, could be involved in insertion of integral membrane proteins into the membrane. The chain is Putative membrane protein insertion efficiency factor from Chlamydia caviae (strain ATCC VR-813 / DSM 19441 / 03DC25 / GPIC) (Chlamydophila caviae).